The primary structure comprises 347 residues: Phosphoribosylformylglycinamidine cyclo-ligase (347 aa).

It belongs to the AIR synthase family.

The protein localises to the cytoplasm. It carries out the reaction 2-formamido-N(1)-(5-O-phospho-beta-D-ribosyl)acetamidine + ATP = 5-amino-1-(5-phospho-beta-D-ribosyl)imidazole + ADP + phosphate + H(+). The protein operates within purine metabolism; IMP biosynthesis via de novo pathway; 5-amino-1-(5-phospho-D-ribosyl)imidazole from N(2)-formyl-N(1)-(5-phospho-D-ribosyl)glycinamide: step 2/2. The polypeptide is Phosphoribosylformylglycinamidine cyclo-ligase (Alkalilimnicola ehrlichii (strain ATCC BAA-1101 / DSM 17681 / MLHE-1)).